Here is a 243-residue protein sequence, read N- to C-terminus: Protein-L-isoaspartate O-methyltransferase 2 (243 aa).

The disordered stretch occupies residues 21–42; it reads DACADRGHPSAERSTPETERRR. The span at 23 to 42 shows a compositional bias: basic and acidic residues; that stretch reads CADRGHPSAERSTPETERRR. S94 is a catalytic residue.

It belongs to the methyltransferase superfamily. L-isoaspartyl/D-aspartyl protein methyltransferase family.

It localises to the cytoplasm. The enzyme catalyses [protein]-L-isoaspartate + S-adenosyl-L-methionine = [protein]-L-isoaspartate alpha-methyl ester + S-adenosyl-L-homocysteine. Functionally, catalyzes the methyl esterification of L-isoaspartyl residues in peptides and proteins that result from spontaneous decomposition of normal L-aspartyl and L-asparaginyl residues. It plays a role in the repair and/or degradation of damaged proteins. This is Protein-L-isoaspartate O-methyltransferase 2 from Anaeromyxobacter sp. (strain Fw109-5).